A 119-amino-acid polypeptide reads, in one-letter code: Large ribosomal subunit protein uL24 (119 aa).

This sequence belongs to the universal ribosomal protein uL24 family. In terms of assembly, part of the 50S ribosomal subunit.

In terms of biological role, one of two assembly initiator proteins, it binds directly to the 5'-end of the 23S rRNA, where it nucleates assembly of the 50S subunit. Functionally, one of the proteins that surrounds the polypeptide exit tunnel on the outside of the subunit. The polypeptide is Large ribosomal subunit protein uL24 (Clavibacter sepedonicus (Clavibacter michiganensis subsp. sepedonicus)).